The chain runs to 711 residues: MAQAAVAVAEVTQLLCAAGGALELAELRRRLRTSLGTDALERLLRDCGRFVVASRAVVAVGAGREAAAAASERLVLAVSSLRLCRAHQGPKPGCTGLCAQLHLCKFLIYGNCKFLKTGKNCRNGHNLKTDHNLSVLRTHGVDHLTYTELCQLLLQNDPSLLPDICLHYNKGDGPFGSCSFQKQCIKLHICQYFLQGECKFGTSCKRSHEFTNSESLEQLERLGLSSDLVSRLLSTYRNAYDIKNKGSALSKVSPSPAGPQGSSERKDSSGPVSPGTPSQEESEQICLYHIRKSCSFQEKCHRVHFHLPYRWQFLDGGKWKDLDNMELIEEAYSNPSKDRIVYTESAAGFHFDNLDFNSMKFGNTLARRLSTASSVTKPPHFILTTDWIWYWMDEFGSWQEYGRQGSGHPVTTISSSDVERAYLAFCAPGADAQAATLKFQAGKHNYELHFKAFLQKNLVYGTIRKVCRRPKYVSPQDVQMKQSCNTKLHGPKSIPDYWDPAALPDLGFKKITLSSSSEEYQKVWNIFNRTLPFYFVQKIERIQNMGLWEVYQWQKCQMQKQNGGKEVDERQLFHGTSANFVDAICQQNFDWRVCGLHGTSYGKGSYFARDAAYSHHYSKSDTHSHMMFLARVLVGDFVRGSTSFVRPPAKEGQSNAFYDSCVNSMSDPTIFVVFEKHQVYPEYLIQYSTSSKPPASPSIFVALGNLFTSRQ.

3 consecutive C3H1-type zinc fingers follow at residues Leu103 to Lys128, Ile164 to His188, and Ile189 to Thr211. Residues Ser247–Gln279 form a disordered region. Ser268 is subject to Phosphoserine. 2 consecutive C3H1-type zinc fingers follow at residues Glu280–Leu307 and Glu281–His306. WWE domains lie at Pro308–Thr371 and Ser374–Arg468. At Cys484 the chain carries ADP-ribosylcysteine. The PARP catalytic domain occupies Ile494 to Thr708. ADP-ribosyl aspartic acid is present on residues Asp610 and Asp621.

This sequence belongs to the ARTD/PARP family. As to quaternary structure, interacts with PARP11; this interaction plays a key role in zika virus suppression. Interacts with ISG15. In terms of processing, auto-mono-ADP-ribosylated. Phosphorylated by PRKD1.

Its subcellular location is the nucleus. It localises to the golgi apparatus. It is found in the trans-Golgi network. The protein resides in the cytoplasm. The protein localises to the stress granule. It catalyses the reaction L-aspartyl-[protein] + NAD(+) = 4-O-(ADP-D-ribosyl)-L-aspartyl-[protein] + nicotinamide. It carries out the reaction L-cysteinyl-[protein] + NAD(+) = S-(ADP-D-ribosyl)-L-cysteinyl-[protein] + nicotinamide + H(+). Its function is as follows. Mono-ADP-ribosyltransferase that mediates mono-ADP-ribosylation of target proteins. Displays anti-alphavirus activity during IFN-gamma immune activation by directly ADP-ribosylating the alphaviral non-structural proteins nsP3 and nsP4. Acts as a component of the PRKD1-driven regulatory cascade that selectively controls a major branch of the basolateral transport pathway by catalyzing the MARylation of GOLGA1. Acts also as a key regulator of mitochondrial function, protein translation, and inflammation. Inhibits PINK1/Parkin-dependent mitophagy and promotes cartilage degeneration by inhibiting the ubiquitination and SUMOylation of MFN1/2 by upregulating ISG15 and ISGylation. In Mus musculus (Mouse), this protein is Protein mono-ADP-ribosyltransferase PARP12.